Here is a 199-residue protein sequence, read N- to C-terminus: NAD(P)H dehydrogenase (quinone) (199 aa).

The Flavodoxin-like domain occupies 4 to 190; that stretch reads ILVLYYSSWG…EGARFQGKRL (187 aa). FMN is bound by residues 10–15 and 78–80; these read SSWGHM and TRY. Residue Trp12 coordinates NAD(+). Trp98 lines the substrate pocket. FMN-binding positions include 113 to 119 and His134; that span reads STATQHG. The tract at residues 155-175 is disordered; sequence VRGGAPYGMTTTSDTDGSRMP.

The protein belongs to the WrbA family. It depends on FMN as a cofactor.

It carries out the reaction a quinone + NADH + H(+) = a quinol + NAD(+). The enzyme catalyses a quinone + NADPH + H(+) = a quinol + NADP(+). This chain is NAD(P)H dehydrogenase (quinone), found in Chelativorans sp. (strain BNC1).